A 166-amino-acid chain; its full sequence is MNYTTICLAFQLCVIFCSSGYYCQAMFFKEIEDLKEYFNASNPDVADGGPLFLDILKNWREESDKKIIQSQIVSFYLKLFENFKDNQIIQRSMDTIKEDMLVRFFNNSSSKLEDFLKLIRIPVNDLQVQRKAINELIKVMNDLSPRSNLRKRKRSHSLFRGRRASK.

Positions 1–23 (MNYTTICLAFQLCVIFCSSGYYC) are cleaved as a signal peptide. At Q24 the chain carries Pyrrolidone carboxylic acid. Residues N39, N106, and N107 are each glycosylated (N-linked (GlcNAc...) asparagine).

The protein belongs to the type II (or gamma) interferon family. As to quaternary structure, homodimer. Interacts with IFNGR1 (via extracellular domain); this interaction promotes IFNGR1 dimerization.

Its subcellular location is the secreted. In terms of biological role, type II interferon produced by immune cells such as T-cells and NK cells that plays crucial roles in antimicrobial, antiviral, and antitumor responses by activating effector immune cells and enhancing antigen presentation. Primarily signals through the JAK-STAT pathway after interaction with its receptor IFNGR1 to affect gene regulation. Upon IFNG binding, IFNGR1 intracellular domain opens out to allow association of downstream signaling components JAK2, JAK1 and STAT1, leading to STAT1 activation, nuclear translocation and transcription of IFNG-regulated genes. Many of the induced genes are transcription factors such as IRF1 that are able to further drive regulation of a next wave of transcription. Plays a role in class I antigen presentation pathway by inducing a replacement of catalytic proteasome subunits with immunoproteasome subunits. In turn, increases the quantity, quality, and repertoire of peptides for class I MHC loading. Increases the efficiency of peptide generation also by inducing the expression of activator PA28 that associates with the proteasome and alters its proteolytic cleavage preference. Up-regulates as well MHC II complexes on the cell surface by promoting expression of several key molecules such as cathepsins B/CTSB, H/CTSH, and L/CTSL. Participates in the regulation of hematopoietic stem cells during development and under homeostatic conditions by affecting their development, quiescence, and differentiation. The polypeptide is Interferon gamma (IFNG) (Mustela putorius furo (European domestic ferret)).